A 337-amino-acid polypeptide reads, in one-letter code: uncharacterized protein (337 aa).

Residues 1-11 are compositionally biased toward acidic residues; that stretch reads MSEIEEEEEEG. Positions 1–20 are disordered; the sequence is MSEIEEEEEEGSASAITGSR. Ser-2 carries the N-acetylserine modification. The stretch at 50 to 130 forms a coiled coil; the sequence is ALSTRVSALE…LQRDVSKLEG (81 aa). Positions 139 to 242 are disordered; that stretch reads LQDDDQNAGT…PISPRRHSVS (104 aa). Low complexity predominate over residues 170-182; the sequence is SSIQSQQASEAIE. A compositionally biased stretch (polar residues) spans 197-211; sequence LSASLPLVSQTTTPR. Residue Thr-213 is modified to Phosphothreonine. Position 217 is a phosphoserine (Ser-217). Positions 223–233 are enriched in polar residues; it reads ASGTPKTTSRP. Position 226 is a phosphothreonine (Thr-226). Ser-235 carries the post-translational modification Phosphoserine.

This is an uncharacterized protein from Arabidopsis thaliana (Mouse-ear cress).